We begin with the raw amino-acid sequence, 730 residues long: Catalase-peroxidase 1 (730 aa).

The segment at 1-24 (MQEKGKCPVTGMTKHKTSGGTTNQ) is disordered. The tryptophyl-tyrosyl-methioninium (Trp-Tyr) (with M-244) cross-link spans 95 to 218 (WHSAGTYRMG…LAAVQMGLIY (124 aa)). H96 (proton acceptor) is an active-site residue. The segment at residues 218–244 (YVNPEGPNGQPSALASGKDIRDTFARM) is a cross-link (tryptophyl-tyrosyl-methioninium (Tyr-Met) (with W-95)). H259 is a heme b binding site.

The protein belongs to the peroxidase family. Peroxidase/catalase subfamily. Homodimer or homotetramer. Heme b serves as cofactor. In terms of processing, formation of the three residue Trp-Tyr-Met cross-link is important for the catalase, but not the peroxidase activity of the enzyme.

It catalyses the reaction H2O2 + AH2 = A + 2 H2O. The catalysed reaction is 2 H2O2 = O2 + 2 H2O. Functionally, bifunctional enzyme with both catalase and broad-spectrum peroxidase activity. The sequence is that of Catalase-peroxidase 1 from Alkaliphilus metalliredigens (strain QYMF).